We begin with the raw amino-acid sequence, 360 residues long: Phospho-N-acetylmuramoyl-pentapeptide-transferase (360 aa).

The next 10 helical transmembrane spans lie at 16 to 36 (FAVFQYLTLRGILGVLTALVL), 73 to 93 (TMGGALILSSIGVSTLLWADL), 97 to 117 (YVWVVLLVTLLFGAIGWVDDY), 134 to 154 (YFWQSVFGLGAAIFLYMTAST), 168 to 188 (YSIPLGAGFIVLTYFVIVGSS), 199 to 219 (GLAIMPTVMVGGGLGIFCYLS), 236 to 256 (AGELIVFCGALIGAGLGFLWF), 263 to 283 (VFMGDVGALALGAALGTIAVI), 288 to 308 (IVLFIMGGVFVMETLSVVIQV), and 338 to 358 (VIVRFWIITVILVLIGLATLK).

Belongs to the glycosyltransferase 4 family. MraY subfamily. The cofactor is Mg(2+).

The protein localises to the cell inner membrane. It catalyses the reaction UDP-N-acetyl-alpha-D-muramoyl-L-alanyl-gamma-D-glutamyl-meso-2,6-diaminopimeloyl-D-alanyl-D-alanine + di-trans,octa-cis-undecaprenyl phosphate = di-trans,octa-cis-undecaprenyl diphospho-N-acetyl-alpha-D-muramoyl-L-alanyl-D-glutamyl-meso-2,6-diaminopimeloyl-D-alanyl-D-alanine + UMP. It participates in cell wall biogenesis; peptidoglycan biosynthesis. Catalyzes the initial step of the lipid cycle reactions in the biosynthesis of the cell wall peptidoglycan: transfers peptidoglycan precursor phospho-MurNAc-pentapeptide from UDP-MurNAc-pentapeptide onto the lipid carrier undecaprenyl phosphate, yielding undecaprenyl-pyrophosphoryl-MurNAc-pentapeptide, known as lipid I. In Pseudomonas fluorescens (strain Pf0-1), this protein is Phospho-N-acetylmuramoyl-pentapeptide-transferase.